The primary structure comprises 290 residues: Probable aquaporin PIP2-1 (290 aa).

2 consecutive transmembrane segments (helical) span residues 43–63 (AVIA…ATVI) and 80–100 (CGGV…FILV). An NPA 1 motif is present at residues 112–114 (NPA). A run of 3 helical transmembrane segments spans residues 131 to 151 (ILYI…VKAF), 173 to 193 (GTGL…VFSA), and 207 to 227 (VLAP…TIPI). The NPA 2 signature appears at 233–235 (NPA). Residues 255–275 (IFWVGPFVGAAIAAFYHQYIL) form a helical membrane-spanning segment.

Belongs to the MIP/aquaporin (TC 1.A.8) family. PIP (TC 1.A.8.11) subfamily. In terms of tissue distribution, expressed in roots, leaves and anthers.

Its subcellular location is the cell membrane. Aquaporins facilitate the transport of water and small neutral solutes across cell membranes. The sequence is that of Probable aquaporin PIP2-1 (PIP2-1) from Oryza sativa subsp. japonica (Rice).